The chain runs to 569 residues: Urease subunit alpha (569 aa).

Residues H136, H138, and K219 each contribute to the Ni(2+) site. An N6-carboxylysine modification is found at K219. H221 contributes to the substrate binding site. Ni(2+) is bound by residues H248 and H274. The active-site Proton donor is H322. Residue D362 participates in Ni(2+) binding.

The protein belongs to the metallo-dependent hydrolases superfamily. Urease alpha subunit family. As to quaternary structure, heterotrimer of UreA (gamma), UreB (beta) and UreC (alpha) subunits. Three heterotrimers associate to form the active enzyme. Requires Ni cation as cofactor. In terms of processing, carboxylation allows a single lysine to coordinate two nickel ions.

The protein localises to the cytoplasm. It carries out the reaction urea + 2 H2O + H(+) = hydrogencarbonate + 2 NH4(+). Its pathway is nitrogen metabolism; urea degradation; CO(2) and NH(3) from urea (urease route): step 1/1. This chain is Urease subunit alpha, found in Dinoroseobacter shibae (strain DSM 16493 / NCIMB 14021 / DFL 12).